Consider the following 495-residue polypeptide: 3-octaprenyl-4-hydroxybenzoate carboxy-lyase (495 aa).

Asn-172 is a Mn(2+) binding site. Prenylated FMN contacts are provided by residues 175–177 (IYR), 189–191 (RWL), and 194–195 (RG). Position 238 (Glu-238) interacts with Mn(2+). Asp-287 functions as the Proton donor in the catalytic mechanism.

The protein belongs to the UbiD family. Homohexamer. Prenylated FMN serves as cofactor. It depends on Mn(2+) as a cofactor.

Its subcellular location is the cell membrane. It carries out the reaction a 4-hydroxy-3-(all-trans-polyprenyl)benzoate + H(+) = a 2-(all-trans-polyprenyl)phenol + CO2. Its pathway is cofactor biosynthesis; ubiquinone biosynthesis. In terms of biological role, catalyzes the decarboxylation of 3-octaprenyl-4-hydroxy benzoate to 2-octaprenylphenol, an intermediate step in ubiquinone biosynthesis. The polypeptide is 3-octaprenyl-4-hydroxybenzoate carboxy-lyase (Yersinia pestis bv. Antiqua (strain Angola)).